A 386-amino-acid polypeptide reads, in one-letter code: Lipoyl synthase, mitochondrial (386 aa).

Positions 115, 120, 126, 146, 150, 153, and 362 each coordinate [4Fe-4S] cluster. Residues 131-351 (ETGTATATIM…QKLGMEMGFR (221 aa)) form the Radical SAM core domain.

This sequence belongs to the radical SAM superfamily. Lipoyl synthase family. It depends on [4Fe-4S] cluster as a cofactor.

The protein resides in the mitochondrion. The enzyme catalyses [[Fe-S] cluster scaffold protein carrying a second [4Fe-4S](2+) cluster] + N(6)-octanoyl-L-lysyl-[protein] + 2 oxidized [2Fe-2S]-[ferredoxin] + 2 S-adenosyl-L-methionine + 4 H(+) = [[Fe-S] cluster scaffold protein] + N(6)-[(R)-dihydrolipoyl]-L-lysyl-[protein] + 4 Fe(3+) + 2 hydrogen sulfide + 2 5'-deoxyadenosine + 2 L-methionine + 2 reduced [2Fe-2S]-[ferredoxin]. It participates in protein modification; protein lipoylation via endogenous pathway; protein N(6)-(lipoyl)lysine from octanoyl-[acyl-carrier-protein]: step 2/2. In terms of biological role, catalyzes the radical-mediated insertion of two sulfur atoms into the C-6 and C-8 positions of the octanoyl moiety bound to the lipoyl domains of lipoate-dependent enzymes, thereby converting the octanoylated domains into lipoylated derivatives. The sequence is that of Lipoyl synthase, mitochondrial from Picea sitchensis (Sitka spruce).